Here is a 350-residue protein sequence, read N- to C-terminus: Renin receptor (350 aa).

The first 17 residues, 1-17 (MAVLVVLLFFLVAGALG), serve as a signal peptide directing secretion. Over 18-302 (NEFSILRSPG…YNLAYKYNLE (285 aa)) the chain is Extracellular. A helical transmembrane segment spans residues 303-323 (YSVVFNLVLWIMIGLALAVII). Over 324 to 350 (TSYNIWNMDPGYDSIIYRMTNQKIRID) the chain is Cytoplasmic. The short motif at 346–350 (KIRID) is the Mediates retrograde transport to the ER element.

In terms of assembly, interacts with renin. Accessory component of the multisubunit proton-transporting vacuolar (V)-ATPase protein pump. Interacts (via N-terminus) with ATP6AP1 (via N-terminus). Interacts with ATP6V0D1; ATP6V0D1 is a V-ATPase complex subunit and the interaction promotes V-ATPase complex assembly. Interacts with TMEM9; TMEM9 is a V-ATPase assembly regulator and the interaction induces the interaction with ATP6V0D1. Interacts with VMA21 (via N-terminus); VMA21 is a V-ATPase accessory component. In terms of processing, phosphorylated. Post-translationally, proteolytically cleaved by a furin-like convertase in the trans-Golgi network to generate N- and C-terminal fragments. As to expression, expressed in glutamatergic and GABAergic neurons with highest levels in the cortex, the hippocampus, the medial habenular nucleus, the cerebellum, the medulla and the olfactory bulb (at protein level).

Its subcellular location is the endoplasmic reticulum membrane. It localises to the lysosome membrane. The protein resides in the cytoplasmic vesicle. The protein localises to the autophagosome membrane. It is found in the cell projection. Its subcellular location is the dendritic spine membrane. It localises to the axon. The protein resides in the endosome membrane. The protein localises to the clathrin-coated vesicle membrane. It is found in the secretory vesicle. Its subcellular location is the synaptic vesicle membrane. Functionally, multifunctional protein which functions as a renin, prorenin cellular receptor and is involved in the assembly of the lysosomal proton-transporting V-type ATPase (V-ATPase) and the acidification of the endo-lysosomal system. May mediate renin-dependent cellular responses by activating ERK1 and ERK2. By increasing the catalytic efficiency of renin in AGT/angiotensinogen conversion to angiotensin I, may also play a role in the renin-angiotensin system (RAS). Through its function in V-type ATPase (v-ATPase) assembly and acidification of the lysosome it regulates protein degradation and may control different signaling pathways important for proper brain development, synapse morphology and synaptic transmission. The polypeptide is Renin receptor (Mus musculus (Mouse)).